The chain runs to 204 residues: Terpene cyclase trt1 (204 aa).

The next 5 helical transmembrane spans lie at 44–64, 67–87, 103–122, 132–154, and 169–189; these read FMSICCDVAWEFVYAFVYPIA, HWAGGIRIWFAMHCVMLFIVA, FARLAYVAITIGFMAGHLAL, FFWSGALCQITASLGSLCLLVCR, and WFYIAITLTLDAIYPVFFFYF.

This sequence belongs to the paxB family.

The protein resides in the membrane. It functions in the pathway secondary metabolite biosynthesis; terpenoid biosynthesis. Terpene cyclase; part of the gene cluster that mediates the biosynthesis of terretonin, a fungal meroterpenoid that acts as a mycotoxin. The first step of the pathway is the synthesis of 3,5-dimethylorsellinic acid (DMOA) by the polyketide synthase trt4. DMOA is then prenylated into farnesyl-DMOA by the polyprenyl transferase trt2. Methylation by the methyltransferase trt5 then leads to farnesyl-DMOA methyl ester which is further subject to epoxidation by the FAD-dependent monooxygenase trt8 to yield epoxyfarnesyl-DMOA methyl ester. Cyclization of epoxyfarnesyl-DMOA methyl ester by the terpene cyclase trt1 leads to a tetracycle intermediate which is in turn converted to preterretonin. Dehydrogenase trt9 comes next to transform preterretonin to preterrenoid. The FAD-dependent monooxygenase trt3 is then required for the C-hydroxylation at C16 of preterrenoid to yield terrenoid. The cytochrome P450 trt6 catalyzes three successive oxidations to transform terrenoid into an unstable intermediate, which then undergoes the D-ring expansion and unusual rearrangement of the methoxy group to afford the core skeleton of terretonin. Trt14 catalyzes the D-ring expansion of terretonin involving intramolecular methoxy rearrangement as well as the hydrolysis of the expanded D-ring and the methyl ester moiety. Finally, the nonheme iron-dependent dioxygenase trt7 accomplishes the last two oxidation reactions steps to complete the biosynthesis of terretonin. Terretonin C is produced via spontaneous decarboxylation of the terretonin precursor. Another shunt product of the terretonin biosynthesis is dihydrofarnesyl-DMOA, derived from epoxyfarnesyl-DMOA through hydrolysis of the epoxide. This Aspergillus terreus (strain NIH 2624 / FGSC A1156) protein is Terpene cyclase trt1.